Consider the following 361-residue polypeptide: MSAAFDPSAYDAQLQAKVTRLRELLAPFGAPQPAVFDSPREHYRLRAEFRLWREDGQRHYAMFAPGEKHKAILIDDFPIASERINALMPRLKAAWQASDELSNRLFQVEFLTTLAGDAMVTMCYHRPLDDAWEVAARQLAEELGVSLIGRSKGKRLVIGRDYAVEKLDVAGRVFSYRQPEGAFTQPNGAVNQKMLSWAYDAIGERDDDLLELYCGNGNFTLPLATRVRQVLATEISKTSVNAALSNLSENAVDNVRLVRLSAEELTQALNEVRPFRRLEGIDLKSYAFGTVFVDPPRAGMDPDTCELTRRFERILYISCNPETLAQNISQLQDTHRIERCALFDQFPYTHHMESGVLLVRR.

Residues Gln185, Tyr213, Asn218, Glu234, and Asp294 each coordinate S-adenosyl-L-methionine. The Nucleophile role is filled by Cys319. Glu353 functions as the Proton acceptor in the catalytic mechanism.

It belongs to the class I-like SAM-binding methyltransferase superfamily. RNA M5U methyltransferase family. TrmA subfamily.

The enzyme catalyses uridine(54) in tRNA + S-adenosyl-L-methionine = 5-methyluridine(54) in tRNA + S-adenosyl-L-homocysteine + H(+). The catalysed reaction is uridine(341) in tmRNA + S-adenosyl-L-methionine = 5-methyluridine(341) in tmRNA + S-adenosyl-L-homocysteine + H(+). Dual-specificity methyltransferase that catalyzes the formation of 5-methyluridine at position 54 (m5U54) in all tRNAs, and that of position 341 (m5U341) in tmRNA (transfer-mRNA). This is tRNA/tmRNA (uracil-C(5))-methyltransferase from Pseudomonas putida (strain W619).